Reading from the N-terminus, the 316-residue chain is Protoheme IX farnesyltransferase (316 aa).

The next 9 membrane-spanning stretches (helical) occupy residues valine 32–asparagine 52, proline 53–leucine 73, isoleucine 93–phenylalanine 113, alanine 116–phenylalanine 136, asparagine 152–threonine 172, threonine 180–phenylalanine 200, isoleucine 226–alanine 246, phenylalanine 248–valine 268, and isoleucine 289–valine 309.

This sequence belongs to the UbiA prenyltransferase family. Protoheme IX farnesyltransferase subfamily.

The protein resides in the cell inner membrane. The enzyme catalyses heme b + (2E,6E)-farnesyl diphosphate + H2O = Fe(II)-heme o + diphosphate. The protein operates within porphyrin-containing compound metabolism; heme O biosynthesis; heme O from protoheme: step 1/1. In terms of biological role, converts heme B (protoheme IX) to heme O by substitution of the vinyl group on carbon 2 of heme B porphyrin ring with a hydroxyethyl farnesyl side group. The sequence is that of Protoheme IX farnesyltransferase from Rhizobium etli (strain CIAT 652).